Consider the following 336-residue polypeptide: MDTGKRLVTVFGGTGNQGSSVVRSLLAHKDKLFHVRVITRDPTSEKAQACAKLGAELVKADGFNKSETVSAFMGSWGAFVNTNSDEEIYKIPGGRSDYDLGSTVLDATKEAGVKHVVYSSGLNLCKYTNGRVHSEGFESKYYVEQYGRRKGFQTFTPIVPASFMEAFLAESFCQSLGGFPWFKRDTGEYLLATPPYGGDERMPWVSVEDDFGDIVHGIFLDPDSYHLKTIQGSSELISFEKMVEDFMEVTGEKARYVRLKSWVDIPLDGTSCREEMRAIFHSMYSNGGKWFVPDESEIDTATTLKKEAKLAQGVTDGSLTAFKDWIHKQWERRLPN.

NADP(+) is bound by residues 12-17 (GGTGNQ), 40-44 (RDPTS), 61-62 (DG), 82-84 (TNS), lysine 140, and 163-166 (FMEA).

This sequence belongs to the NmrA-type oxidoreductase family.

NmrA-like family domain-containing oxidoreductase; part of the gene cluster that mediates the biosynthesis of malbrancheamide, a dichlorinated fungal indole alkaloid that belongs to a family of natural products containing a characteristic bicyclo[2.2.2]diazaoctane core. The first step of malbrancheamide biosynthesis involves coupling of L-proline and L-tryptophan by malG, a bimodular NRPS, to produce L-Pro-L-Trp aldehyde through reductive offloading. This compound undergoes spontaneous cyclization and dehydration to give a dienamine which is reverse prenylated at C-2 by malE. The other prenyltransferase present in the cluster, malB, displays modest activity, suggesting that may be a redundant gene in the pathway. Subsequently, a [4+2] Diels-Alder cyclo-addition catalyzed by the bifunctional enzyme malC forms the characteristic bicyclo[2.2.2]diazaoctane ring of premalbrancheamid. Finally, the flavin-dependent halogenase malA catalyzes the iterative dichlorination of the indole ring of premalbrancheamide to yield C-9 monochlorinated malbrancheamide B, C-8 monochlorinated isomalbrancheamide B, and dichlorinated malbrancheamide. MalA is also able to brominate premalbrancheamide at C-9 to yield malbrancheamide C, and, to a lesser extend, at C-8 to yield isomalbrancheamide C. Finally, malA can brominate C-9 monochlorinated malbrancheamide B at C-8 to yield malbrancheamide D, or C-8 monochlorinated isomalbrancheamide B at C-9 to produce isomalbrancheamide D. The protein is NmrA-like family domain-containing oxidoreductase malD of Malbranchea aurantiaca.